The following is a 153-amino-acid chain: Ribonuclease P protein component (153 aa).

The protein belongs to the RnpA family. In terms of assembly, consists of a catalytic RNA component (M1 or rnpB) and a protein subunit.

The catalysed reaction is Endonucleolytic cleavage of RNA, removing 5'-extranucleotides from tRNA precursor.. In terms of biological role, RNaseP catalyzes the removal of the 5'-leader sequence from pre-tRNA to produce the mature 5'-terminus. It can also cleave other RNA substrates such as 4.5S RNA. The protein component plays an auxiliary but essential role in vivo by binding to the 5'-leader sequence and broadening the substrate specificity of the ribozyme. In Helicobacter acinonychis (strain Sheeba), this protein is Ribonuclease P protein component.